The primary structure comprises 173 residues: MLVTLPIFYLSILTLFLLTFSWLISQQLKTIFLLESQFQYFLDKSKNDELGIEDGFAFSKVCIAKKYFTRAIIESHLVLKKNSLLESPENAAIIAKLYNMLGFIYYKADQKKLAKNFYERAIEVDGNYIVALNNLAKIYEDTKNILKAEALYDKVLNIAKSNKIANTHKKFIK.

TPR repeat units follow at residues 52 to 89 (IEDGFAFSKVCIAKKYFTRAIIESHLVLKKNSLLESPE), 95 to 128 (AKLYNMLGFIYYKADQKKLAKNFYERAIEVDGNY), and 129 to 162 (IVALNNLAKIYEDTKNILKAEALYDKVLNIAKSN).

This sequence belongs to the ycf37 family.

The protein localises to the plastid. It localises to the chloroplast. This is an uncharacterized protein from Porphyra purpurea (Red seaweed).